The following is an 896-amino-acid chain: Desmocollin-3 (896 aa).

Positions 1 to 26 (MAAPGSGAPCAELCRQLLLTLVVFSF) are cleaved as a signal peptide. The propeptide occupies 27–134 (ACEACKKEIF…KETVLRRSKR (108 aa)). Cadherin domains are found at residues 135-242 (RWAP…HPIF), 243-354 (TEAV…LPTF), 355-471 (RQNA…GPEC), 472-579 (SPEV…EILQ), and 580-690 (DYLV…ILGK). At 135–690 (RWAPIPCSMQ…RRSADVILGK (556 aa)) the chain is on the extracellular side. Asn165 carries N-linked (GlcNAc...) asparagine glycosylation. N-linked (GlcNAc...) asparagine glycans are attached at residues Asn391, Asn546, and Asn629. The chain crosses the membrane as a helical span at residues 691–711 (WAILAILLGIALLFSILLTLV). The Cytoplasmic segment spans residues 712–896 (CGIVSARNKK…AALAKTCTKR (185 aa)).

As to quaternary structure, may form homodimers. Interacts with DSG1; there is evidence to suggest that the interaction promotes cell-cell adhesion of keratinocytes. Expressed in stratified epithelia only, such as the epidermis, tongue, esophagus and rumen (at protein level).

Its subcellular location is the cell membrane. It localises to the cell junction. The protein localises to the desmosome. The protein resides in the cytoplasm. In terms of biological role, a component of desmosome cell-cell junctions which are required for positive regulation of cellular adhesion. Required for cell-cell adhesion in the epidermis, as a result required for the maintenance of the dermal cohesion and the dermal barrier function. Required for cell-cell adhesion of epithelial cell layers surrounding the telogen hair club, as a result plays an important role in telogen hair shaft anchorage. Essential for successful completion of embryo compaction and embryo development. The protein is Desmocollin-3 (DSC3) of Bos taurus (Bovine).